The sequence spans 330 residues: Polyprenal reductase (330 aa).

The Cytoplasmic segment spans residues 1–19 (MASWVGTELSALNPLRTLW). The chain crosses the membrane as a helical span at residues 20 to 40 (LALAAAFLLALLLQLAPAGLL). Residues 41 to 74 (PNCALFQDLIRYGKTKLSGPRRPAVCRAFDVPKR) lie on the Lumenal side of the membrane. A helical transmembrane segment spans residues 75 to 95 (YFSHFYVVSVLWNGFLLWFLS). The Cytoplasmic portion of the chain corresponds to 96–132 (RSLFLGAPFPNWLRALLRTLGSTQFRALEMESKASQM). Residues 133–153 (LVGELALSAFLVLVFLWVHSV) form a helical membrane-spanning segment. The Lumenal portion of the chain corresponds to 154 to 168 (RRLFECFYISVFSNA). The chain crosses the membrane as a helical span at residues 169-189 (VMHVVQYCFGLVYYVLVGLTV). Over 190–206 (LSQVPMDDKNVYMLGKN) the chain is Cytoplasmic. The chain crosses the membrane as a helical span at residues 207-227 (LLLPARWFHVLGMMMFLWSSA). At 228 to 277 (HQYECHVILSNLRRNKKGAIVHCQHRIPFGDWFEYVSSANYLAELMIYIS) the chain is on the lumenal side. A helical membrane pass occupies residues 278-298 (MAVTFGFHNFTWWLVVAYVFF). The Cytoplasmic segment spans residues 299–330 (CQALSAFFNHKFYKSTFVSYPKHRKAFLPFLF).

This sequence belongs to the steroid 5-alpha reductase family. Polyprenal reductase subfamily.

The protein resides in the endoplasmic reticulum membrane. It catalyses the reaction a di-trans,poly-cis-dolichal + NADP(+) = a di-trans,poly-cis-polyprenal + NADPH + H(+). It carries out the reaction a 3-oxo-5alpha-steroid + NADP(+) = a 3-oxo-Delta(4)-steroid + NADPH + H(+). The enzyme catalyses androst-4-ene-3,17-dione + NADPH + H(+) = 5alpha-androstan-3,17-dione + NADP(+). The catalysed reaction is 17beta-hydroxy-5alpha-androstan-3-one + NADP(+) = testosterone + NADPH + H(+). The protein operates within protein modification; protein glycosylation. Plays a key role in early steps of protein N-linked glycosylation by being involved in the conversion of polyprenol into dolichol. Acts as a polyprenal reductase that mediates the reduction of polyprenal into dolichal in a NADP-dependent mechanism. Dolichols are required for the synthesis of dolichol-linked monosaccharides and the oligosaccharide precursor used for N-glycosylation. Also able to convert testosterone (T) into 5-alpha-dihydrotestosterone (DHT). This Mesocricetus auratus (Golden hamster) protein is Polyprenal reductase.